The chain runs to 461 residues: Zinc transporter 6 (461 aa).

Residues 1–33 are Cytoplasmic-facing; sequence MGTIHLFRKPQRSFFGKLLREFRLVAADRRSWK. Residues 34-54 traverse the membrane as a helical segment; sequence ILLFGVINLICTGFLLMWCSS. The Extracellular portion of the chain corresponds to 55–64; it reads TNSIALTAYT. A helical transmembrane segment spans residues 65–85; sequence YLTIFDLFSLMTCLISYWVTL. Over 86–98 the chain is Cytoplasmic; it reads RKPSPVYSFGFER. A helical transmembrane segment spans residues 99–119; it reads LEVLAVFASTVLAQLGALFIL. Topologically, residues 120–134 are extracellular; sequence KESAERFLEQPEIHT. The helical transmembrane segment at 135-155 threads the bilayer; sequence GRLLVGTFVALCFNLFTMLSI. The Cytoplasmic portion of the chain corresponds to 156 to 200; sequence RNKPFAYVSEAASTSWLQEHVADLSRSLCGIIPGLSSIFLPRMNP. Residues 201 to 221 form a helical membrane-spanning segment; sequence FVLIDLAGAFALCITYMLIEI. The Extracellular segment spans residues 222-223; sequence NN. The helical transmembrane segment at 224–244 threads the bilayer; sequence YFAVDTASAIAIALMTFGTMY. Residues 245–461 are Cytoplasmic-facing; the sequence is PMSVYSGKVL…TNNRIGQPRP (217 aa). Residues 371-392 form a disordered region; it reads NPVTSTPAKPSSPPPEFSFNTP.

Belongs to the cation diffusion facilitator (CDF) transporter (TC 2.A.4) family. SLC30A subfamily. As to quaternary structure, heterodimer with SLC30A5; form a functional zinc ion transmembrane transporter. Expressed in brain; especially in cerebellum, hippocampus, parahippocampal gyrus, superior and middle temporal gyrus. Also expressed in B-cells, colon, eye, and lung. Lower expression was present in bone, brain, cervix, ear, heart, kidney, muscle, nerve, pancreas, prostate, skin, stomach, and testis.

It is found in the golgi apparatus. The protein resides in the trans-Golgi network membrane. Has probably no intrinsic transporter activity but together with SLC30A5 forms a functional zinc ion:proton antiporter heterodimer, mediating zinc entry into the lumen of organelles along the secretory pathway. As part of that zinc ion:proton antiporter, contributes to zinc ion homeostasis within the early secretory pathway and regulates the activation and folding of enzymes like alkaline phosphatases and enzymes involved in phosphatidylinositol glycan anchor biosynthesis. In Homo sapiens (Human), this protein is Zinc transporter 6.